Here is a 104-residue protein sequence, read N- to C-terminus: MYAIISVGNRQYKVTQDQEFLTEKTGKNAGESFDAKVLLFAESSNKVHIGQPELKTARVSLKVLEDVKGDKIHAYVYKRRKNYQKAWGHRQKLQKVKVVSLSAV.

It belongs to the bacterial ribosomal protein bL21 family. In terms of assembly, part of the 50S ribosomal subunit. Contacts protein L20.

In terms of biological role, this protein binds to 23S rRNA in the presence of protein L20. The sequence is that of Large ribosomal subunit protein bL21 from Leptospira borgpetersenii serovar Hardjo-bovis (strain JB197).